The primary structure comprises 341 residues: 33 kDa chaperonin (341 aa).

Intrachain disulfides connect cysteine 245/cysteine 247 and cysteine 278/cysteine 281.

Belongs to the HSP33 family. In terms of processing, under oxidizing conditions two disulfide bonds are formed involving the reactive cysteines. Under reducing conditions zinc is bound to the reactive cysteines and the protein is inactive.

The protein resides in the cytoplasm. Functionally, redox regulated molecular chaperone. Protects both thermally unfolding and oxidatively damaged proteins from irreversible aggregation. Plays an important role in the bacterial defense system toward oxidative stress. The protein is 33 kDa chaperonin of Thermus thermophilus (strain ATCC 27634 / DSM 579 / HB8).